A 172-amino-acid chain; its full sequence is Transmembrane protein 91 (172 aa).

Disordered regions lie at residues 1–31 (MDSP…RHEL) and 55–83 (PSVS…DWDG). Topologically, residues 1–97 (MDSPSLRELQ…SPFLPHDHLG (97 aa)) are extracellular. The span at 69–81 (VEDMSSSDSDSDW) shows a compositional bias: acidic residues. The helical transmembrane segment at 98–118 (LAVFSMLCCFWPVGIAAFCLA) threads the bilayer. The Cytoplasmic portion of the chain corresponds to 119–139 (QKTNKAWAKGDIQGAGAASRR). A helical membrane pass occupies residues 140–160 (AFLLGVLAVGLGVCTYAAALV). The Extracellular portion of the chain corresponds to 161 to 172 (TLAAYLASRDPP).

It belongs to the CD225/Dispanin family.

The protein resides in the membrane. This Homo sapiens (Human) protein is Transmembrane protein 91 (TMEM91).